A 314-amino-acid polypeptide reads, in one-letter code: tRNA pseudouridine synthase B (314 aa).

Aspartate 41 acts as the Nucleophile in catalysis.

The protein belongs to the pseudouridine synthase TruB family. Type 1 subfamily.

The catalysed reaction is uridine(55) in tRNA = pseudouridine(55) in tRNA. Responsible for synthesis of pseudouridine from uracil-55 in the psi GC loop of transfer RNAs. The chain is tRNA pseudouridine synthase B from Prochlorococcus marinus (strain NATL1A).